The chain runs to 249 residues: 23S rRNA (guanosine-2'-O-)-methyltransferase RlmB (249 aa).

Residues Gly200, Ile220, and Leu229 each contribute to the S-adenosyl-L-methionine site.

It belongs to the class IV-like SAM-binding methyltransferase superfamily. RNA methyltransferase TrmH family. RlmB subfamily.

It is found in the cytoplasm. The catalysed reaction is guanosine(2251) in 23S rRNA + S-adenosyl-L-methionine = 2'-O-methylguanosine(2251) in 23S rRNA + S-adenosyl-L-homocysteine + H(+). In terms of biological role, specifically methylates the ribose of guanosine 2251 in 23S rRNA. In Xanthomonas axonopodis pv. citri (strain 306), this protein is 23S rRNA (guanosine-2'-O-)-methyltransferase RlmB.